A 285-amino-acid polypeptide reads, in one-letter code: MSAHTRTTRKTVTAIRSTKGIGSLVSLTAYSAPMAKLVDEVADVIIVGDSVGMVLYGMPDTLRVTLDMMIAHGAAVVRGAAQACVVVDLPFSTYQESPAQAYRSAARLLAETGAQGVKLEGGTEMADAIRFLTERGIPVMAHVGLMPQQANATGGFRAQGMDPRSAAQVFDAACSAEQAGAFSVVIEGTAEALARHITETLTIPTIGIGASPACDGQVLVTEDMIGAFDAYTPRFVKRYADANAVMRDAIRQYAHDVRQGVFPEPAHCFGYGKPLQLVGAADAAA.

Mg(2+) is bound by residues aspartate 49 and aspartate 88. Residues 49-50 (DS), aspartate 88, and lysine 118 contribute to the 3-methyl-2-oxobutanoate site. Glutamate 120 is a binding site for Mg(2+). The active-site Proton acceptor is glutamate 187.

It belongs to the PanB family. As to quaternary structure, homodecamer; pentamer of dimers. Requires Mg(2+) as cofactor.

The protein localises to the cytoplasm. The enzyme catalyses 3-methyl-2-oxobutanoate + (6R)-5,10-methylene-5,6,7,8-tetrahydrofolate + H2O = 2-dehydropantoate + (6S)-5,6,7,8-tetrahydrofolate. The protein operates within cofactor biosynthesis; (R)-pantothenate biosynthesis; (R)-pantoate from 3-methyl-2-oxobutanoate: step 1/2. Catalyzes the reversible reaction in which hydroxymethyl group from 5,10-methylenetetrahydrofolate is transferred onto alpha-ketoisovalerate to form ketopantoate. The sequence is that of 3-methyl-2-oxobutanoate hydroxymethyltransferase 1 from Burkholderia lata (strain ATCC 17760 / DSM 23089 / LMG 22485 / NCIMB 9086 / R18194 / 383).